The following is a 251-amino-acid chain: D-aminoacyl-tRNA deacylase (251 aa).

Belongs to the DtdA deacylase family. In terms of assembly, monomer. Zn(2+) serves as cofactor.

It catalyses the reaction a D-aminoacyl-tRNA + H2O = a tRNA + a D-alpha-amino acid + H(+). The catalysed reaction is glycyl-tRNA(Ala) + H2O = tRNA(Ala) + glycine + H(+). Functionally, D-aminoacyl-tRNA deacylase with broad substrate specificity. By recycling D-aminoacyl-tRNA to D-amino acids and free tRNA molecules, this enzyme counteracts the toxicity associated with the formation of D-aminoacyl-tRNA entities in vivo. The polypeptide is D-aminoacyl-tRNA deacylase (Pyrobaculum calidifontis (strain DSM 21063 / JCM 11548 / VA1)).